The sequence spans 154 residues: MSTSVDLSSYRDQHFKGSRSEQERSLRDSTTLYVGNLSFYTTEEQIHELFSRCGDVRVIVMGLDKYKKTPCGFCFVEYYTRAEAEAAMRFVNGTRLDDRLIRVDWDAGFIEGRQYGRGKTGGQVRDEYRTDYDAGRGGYGKLLSQKIAPNTDNR.

The tract at residues 1-23 is disordered; it reads MSTSVDLSSYRDQHFKGSRSEQE. A compositionally biased stretch (basic and acidic residues) spans 9–23; the sequence is SYRDQHFKGSRSEQE. Residues Tyr10, Tyr33, 102–106, 113–117, and 123–124 contribute to the mRNA site; these read RVDWD, RQYGR, and QV. The region spanning 30–108 is the RRM domain; sequence TTLYVGNLSF…RLIRVDWDAG (79 aa).

Belongs to the RRM NCBP2 family. Component of the nuclear cap-binding complex (CBC), a heterodimer composed of Cbp80 and Cbp20 that interacts with m7GpppG-capped RNA. Interacts with Ars2.

It localises to the nucleus. Functionally, component of the cap-binding complex (CBC), which binds co-transcriptionally to the 5' cap of pre-mRNAs and is involved in various processes such as pre-mRNA splicing and RNA-mediated gene silencing (RNAi). The CBC complex is involved in miRNA-mediated RNA interference via its interaction with Ars2 and is required for primary microRNAs (miRNAs) processing. Also involved in innate immunity via the short interfering RNAs (siRNAs) processing machinery by restricting the viral RNA production. In the CBC complex, Cbp20 recognizes and binds capped RNAs (m7GpppG-capped RNA) but requires Cbp80 to stabilize the movement of its N-terminal loop and lock the CBC into a high affinity cap-binding state with the cap structure. This Drosophila ananassae (Fruit fly) protein is Nuclear cap-binding protein subunit 2 (Cbp20).